We begin with the raw amino-acid sequence, 427 residues long: Enolase (427 aa).

(2R)-2-phosphoglycerate is bound at residue Gln-163. Glu-205 (proton donor) is an active-site residue. Mg(2+) is bound by residues Asp-242, Glu-285, and Asp-312. Residues Lys-337, Arg-366, Ser-367, and Lys-388 each coordinate (2R)-2-phosphoglycerate. Catalysis depends on Lys-337, which acts as the Proton acceptor.

It belongs to the enolase family. Mg(2+) serves as cofactor.

It localises to the cytoplasm. Its subcellular location is the secreted. It is found in the cell surface. It carries out the reaction (2R)-2-phosphoglycerate = phosphoenolpyruvate + H2O. The protein operates within carbohydrate degradation; glycolysis; pyruvate from D-glyceraldehyde 3-phosphate: step 4/5. Functionally, catalyzes the reversible conversion of 2-phosphoglycerate (2-PG) into phosphoenolpyruvate (PEP). It is essential for the degradation of carbohydrates via glycolysis. The chain is Enolase from Nitrosospira multiformis (strain ATCC 25196 / NCIMB 11849 / C 71).